Here is a 645-residue protein sequence, read N- to C-terminus: Methionine--tRNA ligase (645 aa).

A 'HIGH' region motif is present at residues 13-23 (YYPSTNLHIGN). The Zn(2+) site is built by Cys-128, Cys-131, Cys-145, and Cys-148. Positions 298–302 (KMSKS) match the 'KMSKS' region motif. Lys-301 contributes to the ATP binding site. In terms of domain architecture, tRNA-binding spans 544 to 645 (DFDKIDLRVV…GEMLTGSQVR (102 aa)).

The protein belongs to the class-I aminoacyl-tRNA synthetase family. MetG type 2A subfamily. In terms of assembly, homodimer. Requires Zn(2+) as cofactor.

Its subcellular location is the cytoplasm. It catalyses the reaction tRNA(Met) + L-methionine + ATP = L-methionyl-tRNA(Met) + AMP + diphosphate. Is required not only for elongation of protein synthesis but also for the initiation of all mRNA translation through initiator tRNA(fMet) aminoacylation. The protein is Methionine--tRNA ligase (metG) of Clostridium perfringens (strain 13 / Type A).